A 281-amino-acid polypeptide reads, in one-letter code: Cardosin-F (281 aa).

A Peptidase A1 domain is found at 18–278 (YYGEIGIGTP…DYGNLLVGFA (261 aa)). Residue Asp-36 is part of the active site. The cysteines at positions 181 and 185 are disulfide-linked. The active site involves Asp-190. An N-linked (GlcNAc...) asparagine glycan is attached at Asn-213.

It belongs to the peptidase A1 family. In terms of assembly, heterodimer of a light chain and a heavy chain. An intermediate form is produced first, and undergoes proteolytic processing to remove the internal plant-specific insert (PSI) and the propeptide. In terms of processing, N-glycosylated. In terms of tissue distribution, pistils.

The protein localises to the microsome membrane. The protein resides in the protein storage vacuole. It localises to the secreted. Its subcellular location is the cell wall. It is found in the extracellular space. The protein localises to the extracellular matrix. With respect to regulation, inhibited by pepstatin. In terms of biological role, aspartic protease with a high preference for bonds between hydrophobic residues. The chain is Cardosin-F from Cynara cardunculus (Cardoon).